We begin with the raw amino-acid sequence, 410 residues long: Histone-lysine N-methyltransferase SUV39H2 (410 aa).

Residues Y47–K105 form the Chromo domain. The Pre-SET domain maps to F189–G247. Zn(2+)-binding residues include C191, C193, C196, C201, C202, C229, C233, C235, and C239. The region spanning Y250–Q373 is the SET domain. Residues C261–W263, Y304, and N330–H331 each bind S-adenosyl-L-methionine. C333 contributes to the Zn(2+) binding site. Residues S381, S384, and S388 each carry the phosphoserine modification. The region spanning A394–N410 is the Post-SET domain. Zn(2+) contacts are provided by C398, C400, and C405.

The protein belongs to the class V-like SAM-binding methyltransferase superfamily. Histone-lysine methyltransferase family. Suvar3-9 subfamily. As to quaternary structure, interacts with SMAD5. The large PER complex involved in the histone methylation is composed of at least PER2, CBX3, TRIM28, SUV39H1 and/or SUV39H2; CBX3 mediates the formation of the complex. Ubiquitinated by the DCX(DCAF13) E3 ubiquitin ligase complex, leading to its degradation.

The protein localises to the nucleus. It localises to the chromosome. Its subcellular location is the centromere. The enzyme catalyses L-lysyl(9)-[histone H3] + 3 S-adenosyl-L-methionine = N(6),N(6),N(6)-trimethyl-L-lysyl(9)-[histone H3] + 3 S-adenosyl-L-homocysteine + 3 H(+). Functionally, histone methyltransferase that specifically trimethylates 'Lys-9' of histone H3 using monomethylated H3 'Lys-9' as substrate. H3 'Lys-9' trimethylation represents a specific tag for epigenetic transcriptional repression by recruiting HP1 (CBX1, CBX3 and/or CBX5) proteins to methylated histones. Mainly functions in heterochromatin regions, thereby playing a central role in the establishment of constitutive heterochromatin at pericentric and telomere regions. H3 'Lys-9' trimethylation is also required to direct DNA methylation at pericentric repeats. SUV39H1 is targeted to histone H3 via its interaction with RB1 and is involved in many processes, such as cell cycle regulation, transcriptional repression and regulation of telomere length. May participate in regulation of higher-order chromatin organization during spermatogenesis. Recruited by the large PER complex to the E-box elements of the circadian target genes such as PER2 itself or PER1, contributes to the conversion of local chromatin to a heterochromatin-like repressive state through H3 'Lys-9' trimethylation. The polypeptide is Histone-lysine N-methyltransferase SUV39H2 (SUV39H2) (Bos taurus (Bovine)).